A 137-amino-acid polypeptide reads, in one-letter code: Large ribosomal subunit protein eL28 (137 aa).

N-acetylserine is present on serine 2. Residues lysine 58 and lysine 65 each participate in a glycyl lysine isopeptide (Lys-Gly) (interchain with G-Cter in SUMO2) cross-link. Position 115 is a phosphoserine (serine 115).

The protein belongs to the eukaryotic ribosomal protein eL28 family. In terms of assembly, component of the large ribosomal subunit.

It is found in the cytoplasm. Its function is as follows. Component of the large ribosomal subunit. The ribosome is a large ribonucleoprotein complex responsible for the synthesis of proteins in the cell. The sequence is that of Large ribosomal subunit protein eL28 (RPL28) from Bos taurus (Bovine).